The primary structure comprises 287 residues: Glycine--tRNA ligase alpha subunit (287 aa).

It belongs to the class-II aminoacyl-tRNA synthetase family. As to quaternary structure, tetramer of two alpha and two beta subunits.

It localises to the cytoplasm. The enzyme catalyses tRNA(Gly) + glycine + ATP = glycyl-tRNA(Gly) + AMP + diphosphate. The chain is Glycine--tRNA ligase alpha subunit from Campylobacter jejuni subsp. jejuni serotype O:23/36 (strain 81-176).